The primary structure comprises 138 residues: 2-amino-3-carboxymuconate-6-semialdehyde decarboxylase (138 aa).

Zn(2+) is bound by residues His6 and His8. Arg47 serves as a coordination point for substrate. Residues His70 and Asp126 each coordinate Zn(2+).

The protein belongs to the metallo-dependent hydrolases superfamily. ACMSD family. Monomer.

The catalysed reaction is 2-amino-3-carboxymuconate 6-semialdehyde + H(+) = 2-aminomuconate 6-semialdehyde + CO2. The protein operates within secondary metabolite metabolism; quinolate metabolism. Converts alpha-amino-beta-carboxymuconate-epsilon-semialdehyde (ACMS) to alpha-aminomuconate semialdehyde (AMS). ACMS can be converted non-enzymatically to quinolate (QA), a key precursor of NAD, and a potent endogenous excitotoxin of neuronal cells which is implicated in the pathogenesis of various neurodegenerative disorders. In the presence of ACMSD, ACMS is converted to AMS, a benign catabolite. ACMSD ultimately controls the metabolic fate of tryptophan catabolism along the kynurenine pathway. This is 2-amino-3-carboxymuconate-6-semialdehyde decarboxylase (ACMSD) from Sus scrofa (Pig).